Here is a 121-residue protein sequence, read N- to C-terminus: Small ribosomal subunit protein uS13 (121 aa).

The disordered stretch occupies residues 90-121; it reads RHRHGLPVRGQHTKNNARTRKGKAVAIAGKKK.

Belongs to the universal ribosomal protein uS13 family. In terms of assembly, part of the 30S ribosomal subunit. Forms a loose heterodimer with protein S19. Forms two bridges to the 50S subunit in the 70S ribosome.

Functionally, located at the top of the head of the 30S subunit, it contacts several helices of the 16S rRNA. In the 70S ribosome it contacts the 23S rRNA (bridge B1a) and protein L5 of the 50S subunit (bridge B1b), connecting the 2 subunits; these bridges are implicated in subunit movement. Contacts the tRNAs in the A and P-sites. This Limosilactobacillus fermentum (strain NBRC 3956 / LMG 18251) (Lactobacillus fermentum) protein is Small ribosomal subunit protein uS13.